Consider the following 197-residue polypeptide: NADH-quinone oxidoreductase subunit C (197 aa).

Belongs to the complex I 30 kDa subunit family. In terms of assembly, NDH-1 is composed of 14 different subunits. Subunits NuoB, C, D, E, F, and G constitute the peripheral sector of the complex.

It is found in the cell inner membrane. It catalyses the reaction a quinone + NADH + 5 H(+)(in) = a quinol + NAD(+) + 4 H(+)(out). In terms of biological role, NDH-1 shuttles electrons from NADH, via FMN and iron-sulfur (Fe-S) centers, to quinones in the respiratory chain. The immediate electron acceptor for the enzyme in this species is believed to be ubiquinone. Couples the redox reaction to proton translocation (for every two electrons transferred, four hydrogen ions are translocated across the cytoplasmic membrane), and thus conserves the redox energy in a proton gradient. The polypeptide is NADH-quinone oxidoreductase subunit C (Neisseria meningitidis serogroup A / serotype 4A (strain DSM 15465 / Z2491)).